Consider the following 250-residue polypeptide: C-X-C motif chemokine 16 (250 aa).

Residues 1–24 (MPLWELWFFLLALFLAWLTPPGNG) form the signal peptide. Over 25 to 200 (NEGSMAGSCP…NVGATAGTSA (176 aa)) the chain is Extracellular. 2 disulfides stabilise this stretch: Cys33/Cys63 and Cys35/Cys77. The disordered stretch occupies residues 105–186 (VAHQQHLAPQ…AKSEARENQE (82 aa)). Polar residues-rich tracts occupy residues 128 to 147 (DSST…TQKP) and 163 to 172 (TSETDTSTVG). Residues 201-221 (LVPVLSLLVIIFLLTGVLLYV) form a helical membrane-spanning segment. The Cytoplasmic portion of the chain corresponds to 222 to 250 (MCKKRQEQSRQYPPDPQLHYVPVASNINT).

Belongs to the intercrine alpha (chemokine CxC) family. In terms of processing, glycosylated.

It localises to the membrane. Induces a strong chemotactic response. Induces calcium mobilization. Binds to CXCR6/Bonzo. Also acts as a scavenger receptor on macrophages, which specifically binds to OxLDL (oxidized low density lipoprotein), suggesting that it may be involved in pathophysiology such as atherogenesis. In Sus scrofa (Pig), this protein is C-X-C motif chemokine 16 (CXCL16).